The following is a 150-amino-acid chain: UPF0756 membrane protein APL_0366 (150 aa).

The next 4 helical transmembrane spans lie at 12 to 34 (LVVL…ATVL), 52 to 72 (HGLS…IVSG), 82 to 102 (FLNW…WLGG), and 123 to 143 (IIGV…AGIL).

Belongs to the UPF0756 family.

It is found in the cell membrane. The polypeptide is UPF0756 membrane protein APL_0366 (Actinobacillus pleuropneumoniae serotype 5b (strain L20)).